Consider the following 583-residue polypeptide: 2-succinyl-5-enolpyruvyl-6-hydroxy-3-cyclohexene-1-carboxylate synthase (583 aa).

The protein belongs to the TPP enzyme family. MenD subfamily. As to quaternary structure, homodimer. It depends on Mg(2+) as a cofactor. The cofactor is Mn(2+). Requires thiamine diphosphate as cofactor.

It carries out the reaction isochorismate + 2-oxoglutarate + H(+) = 5-enolpyruvoyl-6-hydroxy-2-succinyl-cyclohex-3-ene-1-carboxylate + CO2. It participates in quinol/quinone metabolism; 1,4-dihydroxy-2-naphthoate biosynthesis; 1,4-dihydroxy-2-naphthoate from chorismate: step 2/7. The protein operates within quinol/quinone metabolism; menaquinone biosynthesis. Functionally, catalyzes the thiamine diphosphate-dependent decarboxylation of 2-oxoglutarate and the subsequent addition of the resulting succinic semialdehyde-thiamine pyrophosphate anion to isochorismate to yield 2-succinyl-5-enolpyruvyl-6-hydroxy-3-cyclohexene-1-carboxylate (SEPHCHC). This Chlorobium chlorochromatii (strain CaD3) protein is 2-succinyl-5-enolpyruvyl-6-hydroxy-3-cyclohexene-1-carboxylate synthase.